The primary structure comprises 192 residues: Dynein axonemal light chain 1 (192 aa).

LRR repeat units follow at residues asparagine 49–lysine 70, tyrosine 71–glycine 92, threonine 94–lysine 115, and lysine 116–glycine 137. The LRRCT domain occupies asparagine 150–serine 192.

This sequence belongs to the dynein light chain LC1-type family. In terms of assembly, interacts with DNAH5, a outer arm dynein heavy chain. Interacts with tubulin located within the A-tubule of the outer doublets in a ATP-independent manner.

It is found in the cytoplasm. Its subcellular location is the cytoskeleton. The protein localises to the cilium axoneme. Functionally, part of the multisubunit axonemal ATPase complexes that generate the force for cilia motility and govern beat frequency. Component of the outer arm dynein (ODA). May be involved in a mechanosensory feedback mechanism controlling ODA activity based on external conformational cues by tethering the outer arm dynein heavy chain (DNAH5) to the microtubule within the axoneme. This Xenopus laevis (African clawed frog) protein is Dynein axonemal light chain 1 (dnal1).